The chain runs to 859 residues: Cation/H(+) antiporter 24 (859 aa).

12 helical membrane-spanning segments follow: residues 64–84 (AFST…VVSI), 92–112 (PRIV…FGGI), 122–142 (PIAN…FLFL), 161–181 (YIAA…GMAM), 194–214 (SIGG…YTVL), 227–247 (FAMS…VIFE), 258–278 (YSVF…LLVV), 291–311 (EGTL…LASC), 312–332 (FLTD…GLLV), 348–368 (TFIY…GTNI), 384–404 (FYMT…AALF), and 438–458 (IVGF…TAVT). The tract at residues 538-566 (IDHEQRKEEEEEEYEEEEEEPERKQSGRI) is disordered. The segment covering 546–557 (EEEEEYEEEEEE) has biased composition (acidic residues). S857 is modified (phosphoserine).

This sequence belongs to the monovalent cation:proton antiporter 2 (CPA2) transporter (TC 2.A.37) family. CHX (TC 2.A.37.4) subfamily. In terms of tissue distribution, specifically expressed in pollen.

The protein resides in the membrane. Its function is as follows. May operate as a cation/H(+) antiporter. The sequence is that of Cation/H(+) antiporter 24 (CHX24) from Arabidopsis thaliana (Mouse-ear cress).